A 202-amino-acid polypeptide reads, in one-letter code: Solute carrier family 66 member 3 (202 aa).

Positions 1 to 19 (MEAALLGLCNWSTLGVCAA) are cleaved as a signal peptide. Transmembrane regions (helical) follow at residues 33 to 53 (SARG…LVFL), 64 to 84 (LTYL…LCIF), 97 to 117 (IAVL…IDLA), and 171 to 191 (FTIL…TVTV).

Its subcellular location is the membrane. The sequence is that of Solute carrier family 66 member 3 from Homo sapiens (Human).